The following is a 284-amino-acid chain: D-tagatose-1,6-bisphosphate aldolase subunit GatY (284 aa).

The active-site Proton donor is the aspartate 82. Zn(2+) contacts are provided by histidine 83 and histidine 180. A dihydroxyacetone phosphate-binding site is contributed by glycine 181. Histidine 208 is a Zn(2+) binding site. Residues 209-211 and 230-233 each bind dihydroxyacetone phosphate; these read GAS and NVAT.

The protein belongs to the class II fructose-bisphosphate aldolase family. TagBP aldolase GatY subfamily. Forms a complex with GatZ. Zn(2+) serves as cofactor.

It catalyses the reaction D-tagatofuranose 1,6-bisphosphate = D-glyceraldehyde 3-phosphate + dihydroxyacetone phosphate. It functions in the pathway carbohydrate metabolism; D-tagatose 6-phosphate degradation; D-glyceraldehyde 3-phosphate and glycerone phosphate from D-tagatose 6-phosphate: step 2/2. In terms of biological role, catalytic subunit of the tagatose-1,6-bisphosphate aldolase GatYZ, which catalyzes the reversible aldol condensation of dihydroxyacetone phosphate (DHAP or glycerone-phosphate) with glyceraldehyde 3-phosphate (G3P) to produce tagatose 1,6-bisphosphate (TBP). Requires GatZ subunit for full activity and stability. Is involved in the catabolism of galactitol. This Escherichia coli (strain 55989 / EAEC) protein is D-tagatose-1,6-bisphosphate aldolase subunit GatY.